A 412-amino-acid polypeptide reads, in one-letter code: NADH-quinone oxidoreductase subunit D (412 aa).

This sequence belongs to the complex I 49 kDa subunit family. As to quaternary structure, NDH-1 is composed of 14 different subunits. Subunits NuoB, C, D, E, F, and G constitute the peripheral sector of the complex.

It is found in the cell inner membrane. It catalyses the reaction a quinone + NADH + 5 H(+)(in) = a quinol + NAD(+) + 4 H(+)(out). In terms of biological role, NDH-1 shuttles electrons from NADH, via FMN and iron-sulfur (Fe-S) centers, to quinones in the respiratory chain. The immediate electron acceptor for the enzyme in this species is believed to be a menaquinone. Couples the redox reaction to proton translocation (for every two electrons transferred, four hydrogen ions are translocated across the cytoplasmic membrane), and thus conserves the redox energy in a proton gradient. The sequence is that of NADH-quinone oxidoreductase subunit D from Flavobacterium johnsoniae (strain ATCC 17061 / DSM 2064 / JCM 8514 / BCRC 14874 / CCUG 350202 / NBRC 14942 / NCIMB 11054 / UW101) (Cytophaga johnsonae).